Reading from the N-terminus, the 223-residue chain is MDLATLRAQQIELASNVVREDRLNVDPPTIIGGADVGFEQGGEVTRAAMVLLKYPSLELLEYQVARIPTTMPYIPGFLSFREYPALLTAWEMLSRKPDLLFVDGHGISHPRRLGVASHFGMLVDVPTIGVAKKRLCGKFEPLSDEPGAVSPLMDKGEQLAWVWRSKARCNPLFVSTGHRVSIDTALGWVQRCTKGYRLPEPTRWADAVASGRPAFLRWQEIQG.

D35 and D103 together coordinate Mg(2+).

The protein belongs to the endonuclease V family. Mg(2+) is required as a cofactor.

It is found in the cytoplasm. It carries out the reaction Endonucleolytic cleavage at apurinic or apyrimidinic sites to products with a 5'-phosphate.. Its function is as follows. DNA repair enzyme involved in the repair of deaminated bases. Selectively cleaves double-stranded DNA at the second phosphodiester bond 3' to a deoxyinosine leaving behind the intact lesion on the nicked DNA. The polypeptide is Endonuclease V (Cronobacter sakazakii (strain ATCC BAA-894) (Enterobacter sakazakii)).